A 123-amino-acid chain; its full sequence is Ig heavy chain V region HPCG13 (123 aa).

The Ig-like domain occupies 1–114 (EVKLVESGGG…GSYWYFDVWG (114 aa)).

The protein is Ig heavy chain V region HPCG13 of Mus musculus (Mouse).